Reading from the N-terminus, the 476-residue chain is Serine--tRNA ligase (476 aa).

280–282 (TAE) serves as a coordination point for L-serine. An ATP-binding site is contributed by 311–313 (RAE). Glu-334 provides a ligand contact to L-serine. 401-404 (EISS) contacts ATP. Residue Ser-436 coordinates L-serine.

The protein belongs to the class-II aminoacyl-tRNA synthetase family. Type-1 seryl-tRNA synthetase subfamily. Homodimer. The tRNA molecule binds across the dimer.

It is found in the cytoplasm. It catalyses the reaction tRNA(Ser) + L-serine + ATP = L-seryl-tRNA(Ser) + AMP + diphosphate + H(+). It carries out the reaction tRNA(Sec) + L-serine + ATP = L-seryl-tRNA(Sec) + AMP + diphosphate + H(+). It participates in aminoacyl-tRNA biosynthesis; selenocysteinyl-tRNA(Sec) biosynthesis; L-seryl-tRNA(Sec) from L-serine and tRNA(Sec): step 1/1. Catalyzes the attachment of serine to tRNA(Ser). Is also able to aminoacylate tRNA(Sec) with serine, to form the misacylated tRNA L-seryl-tRNA(Sec), which will be further converted into selenocysteinyl-tRNA(Sec). This chain is Serine--tRNA ligase, found in Rhodopseudomonas palustris (strain HaA2).